A 403-amino-acid polypeptide reads, in one-letter code: Tetratricopeptide repeat protein 19, mitochondrial (403 aa).

The transit peptide at 1-67 (MALRSYCRQL…WHRRSWHRCA (67 aa)) directs the protein to the mitochondrion. TPR repeat units lie at residues 154–187 (IYTY…MLSG), 297–330 (LVLM…GQAA), and 336–369 (HVLL…AHTA).

This sequence belongs to the TTC19 family. As to quaternary structure, binds to the mature mitochondrial complex III dimer, after the incorporation of the Rieske protein (UQCRFS1). Interacts with UQCRC1 and UQCRFS1. Interacts with ZFYVE26 and CHMP4B.

Its subcellular location is the mitochondrion inner membrane. In terms of biological role, required for the preservation of the structural and functional integrity of mitochondrial respiratory complex III by allowing the physiological turnover of the Rieske protein UQCRFS1. Involved in the clearance of UQCRFS1 N-terminal fragments, which are produced upon incorporation into the complex III and whose presence is detrimental for its catalytic activity. In Danio rerio (Zebrafish), this protein is Tetratricopeptide repeat protein 19, mitochondrial (ttc19).